A 397-amino-acid polypeptide reads, in one-letter code: Elongation factor Tu (397 aa).

The tr-type G domain occupies 10–206 (KPHCNIGTIG…AVDTWIPDPQ (197 aa)). Residues 19–26 (GHVDHGKT) form a G1 region. 19-26 (GHVDHGKT) is a binding site for GTP. Thr-26 provides a ligand contact to Mg(2+). Residues 61–65 (GITIS) are G2. The interval 82-85 (DCPG) is G3. GTP is bound by residues 82–86 (DCPGH) and 137–140 (NKCD). Residues 137 to 140 (NKCD) are G4. The segment at 175–177 (SAL) is G5.

It belongs to the TRAFAC class translation factor GTPase superfamily. Classic translation factor GTPase family. EF-Tu/EF-1A subfamily. In terms of assembly, monomer.

Its subcellular location is the cytoplasm. The catalysed reaction is GTP + H2O = GDP + phosphate + H(+). GTP hydrolase that promotes the GTP-dependent binding of aminoacyl-tRNA to the A-site of ribosomes during protein biosynthesis. The chain is Elongation factor Tu from Lachnoclostridium phytofermentans (strain ATCC 700394 / DSM 18823 / ISDg) (Clostridium phytofermentans).